A 404-amino-acid chain; its full sequence is METAKDNTARTFMELMRVPVQFYRTIGEDIYAHRSTNPLKSLLFKIYLYAGFINFNLLVIGELVFFYNSIQDFETIRLAIAVAPCIGFSLVADFKQAAMIRGKKTLIMLLDDLENMHPKTLAKQMEYKLPDFEKTMKRVINIFTFLCLAYTTTFSFYPAIKASVKFNFLGYDTFDRNFGFLIWFPFDATRNNLIYWIMYWDIAHGAYLAGIAFLCADLLLVVVITQICMHFNYISMRLEDHPCNSNEDKENIEFLIGIIRYHDKCLKLCEHVNDLYSFSLLLNFLMASMQICFIAFQVTESTVEVIIIYCIFLMTSMVQVFMVCYYGDTLIAASLKVGDAAYNQKWFQCSKSYCTMLKLLIMRSQKPASIRPPTFPPISLVTYMKVISMSYQFFALLRTTYSNN.

Residues 1 to 45 (METAKDNTARTFMELMRVPVQFYRTIGEDIYAHRSTNPLKSLLFK) are Cytoplasmic-facing. Residues 46-66 (IYLYAGFINFNLLVIGELVFF) form a helical membrane-spanning segment. Topologically, residues 67-79 (YNSIQDFETIRLA) are extracellular. Residues 80-100 (IAVAPCIGFSLVADFKQAAMI) traverse the membrane as a helical segment. At 101 to 139 (RGKKTLIMLLDDLENMHPKTLAKQMEYKLPDFEKTMKRV) the chain is on the cytoplasmic side. Residues 140 to 160 (INIFTFLCLAYTTTFSFYPAI) traverse the membrane as a helical segment. Residues 161–204 (KASVKFNFLGYDTFDRNFGFLIWFPFDATRNNLIYWIMYWDIAH) are Extracellular-facing. A helical membrane pass occupies residues 205-225 (GAYLAGIAFLCADLLLVVVIT). At 226-277 (QICMHFNYISMRLEDHPCNSNEDKENIEFLIGIIRYHDKCLKLCEHVNDLYS) the chain is on the cytoplasmic side. Residues 278–298 (FSLLLNFLMASMQICFIAFQV) traverse the membrane as a helical segment. The Extracellular segment spans residues 299 to 304 (TESTVE). Residues 305 to 326 (VIIIYCIFLMTSMVQVFMVCYY) traverse the membrane as a helical segment. Residues 327–373 (GDTLIAASLKVGDAAYNQKWFQCSKSYCTMLKLLIMRSQKPASIRPP) are Cytoplasmic-facing. A helical membrane pass occupies residues 374 to 394 (TFPPISLVTYMKVISMSYQFF). The Extracellular portion of the chain corresponds to 395–404 (ALLRTTYSNN).

It belongs to the insect chemoreceptor superfamily. Heteromeric odorant receptor channel (TC 1.A.69) family. Or49a subfamily. In terms of assembly, interacts with Orco. Complexes exist early in the endomembrane system in olfactory sensory neurons (OSNs), coupling these complexes to the conserved ciliary trafficking pathway. In terms of tissue distribution, expressed in olfactory sensory neurons in the antenna.

It localises to the cell membrane. Functionally, odorant receptor which mediates acceptance or avoidance behavior, depending on its substrates. The odorant receptor repertoire encodes a large collection of odor stimuli that vary widely in identity, intensity, and duration. May form a complex with Orco to form odorant-sensing units, providing sensitive and prolonged odorant signaling and calcium permeability. This is Odorant receptor 67c (Or67c) from Drosophila melanogaster (Fruit fly).